A 323-amino-acid polypeptide reads, in one-letter code: Mas-related G-protein coupled receptor member X1 (323 aa).

Residues 1-30 (MDPTISSLSTESTTLNKTGHPSCRPILTLS) are Extracellular-facing. N16 carries an N-linked (GlcNAc...) asparagine glycan. Residues 31–51 (FLVPIITLLGLAGNTIVLWLL) traverse the membrane as a helical segment. The Cytoplasmic portion of the chain corresponds to 52-59 (GFRMRRKA). The chain crosses the membrane as a helical span at residues 60–80 (ISVYVLNLSLADSFFLCCHFI). The Extracellular portion of the chain corresponds to 81-100 (DSLMRIMNFYGIYAHKLSKE). The chain crosses the membrane as a helical span at residues 101 to 121 (ILGNAAIIPYISGLSILSAIS). At 122–143 (TERCLSVLWPIWYHCHRPRNMS) the chain is on the cytoplasmic side. Residues 144 to 164 (AIICVLIWVLSFLMGILDWFF) form a helical membrane-spanning segment. At 165-180 (SGFLGETHHHLWKNVD) the chain is on the extracellular side. The helical transmembrane segment at 181–201 (FIVTAFLIFLFMLLFGSSLAL) threads the bilayer. The Cytoplasmic segment spans residues 202–226 (LVRILCGSRRKPLSRLYVTISLTVM). A helical transmembrane segment spans residues 227–247 (VYLICGLPLGLYLFLLYWFGI). At 248–258 (HLHYPFCHIYQ) the chain is on the extracellular side. Residues 259–279 (VTVLLSCVNSSANPIIYFLVG) form a helical membrane-spanning segment. At 280-323 (SFRHRKKHRSLKMVLKRALEETPEEDEYTDSHVQKPTEISERRC) the chain is on the cytoplasmic side.

It belongs to the G-protein coupled receptor 1 family. Mas subfamily. In terms of tissue distribution, uniquely localized in a subset of small dorsal root and trigeminal sensory neurons. Associated preferentially with IB4 class of small-diameter somatosensory afferents (also known as nociceptors).

It localises to the cell membrane. Its function is as follows. Orphan receptor activated by neuropeptides terminating in Arg-Phe or Arg-Phe-amide. Mediates its action by association with G proteins that activate a phosphatidylinositol-calcium second messenger system. Its effect is mediated by G(q) and G(11) proteins. May regulate the function of nociceptive neurons by modulation of pain perception. This is Mas-related G-protein coupled receptor member X1 (Mrgprx1) from Rattus norvegicus (Rat).